Reading from the N-terminus, the 95-residue chain is uncharacterized protein (95 aa).

The ABM domain maps to valine 2 to phenylalanine 92.

This is an uncharacterized protein from Bacillus subtilis (strain 168).